We begin with the raw amino-acid sequence, 228 residues long: N-(5'-phosphoribosyl)anthranilate isomerase (228 aa).

Belongs to the TrpF family.

It carries out the reaction N-(5-phospho-beta-D-ribosyl)anthranilate = 1-(2-carboxyphenylamino)-1-deoxy-D-ribulose 5-phosphate. Its pathway is amino-acid biosynthesis; L-tryptophan biosynthesis; L-tryptophan from chorismate: step 3/5. The sequence is that of N-(5'-phosphoribosyl)anthranilate isomerase from Azorhizobium caulinodans (strain ATCC 43989 / DSM 5975 / JCM 20966 / LMG 6465 / NBRC 14845 / NCIMB 13405 / ORS 571).